The chain runs to 120 residues: NAD(P)H-quinone oxidoreductase subunit 3, chloroplastic (120 aa).

The next 3 membrane-spanning stretches (helical) occupy residues 9–29 (IFWA…LISG), 64–84 (MFAL…PWAM), and 88–108 (VLGV…ILGL).

This sequence belongs to the complex I subunit 3 family. In terms of assembly, NDH is composed of at least 16 different subunits, 5 of which are encoded in the nucleus.

It localises to the plastid. It is found in the chloroplast thylakoid membrane. It catalyses the reaction a plastoquinone + NADH + (n+1) H(+)(in) = a plastoquinol + NAD(+) + n H(+)(out). The enzyme catalyses a plastoquinone + NADPH + (n+1) H(+)(in) = a plastoquinol + NADP(+) + n H(+)(out). Its function is as follows. NDH shuttles electrons from NAD(P)H:plastoquinone, via FMN and iron-sulfur (Fe-S) centers, to quinones in the photosynthetic chain and possibly in a chloroplast respiratory chain. The immediate electron acceptor for the enzyme in this species is believed to be plastoquinone. Couples the redox reaction to proton translocation, and thus conserves the redox energy in a proton gradient. In Capsella bursa-pastoris (Shepherd's purse), this protein is NAD(P)H-quinone oxidoreductase subunit 3, chloroplastic.